Reading from the N-terminus, the 452-residue chain is Cell division protein FtsZ (452 aa).

Residues 24-28, 111-113, Glu142, Arg146, and Asp190 contribute to the GTP site; these read GAGSN and GTG.

This sequence belongs to the FtsZ family. As to quaternary structure, homodimer. Polymerizes to form a dynamic ring structure in a strictly GTP-dependent manner. Interacts directly with several other division proteins.

Its subcellular location is the cytoplasm. Functionally, essential cell division protein that forms a contractile ring structure (Z ring) at the future cell division site. The regulation of the ring assembly controls the timing and the location of cell division. One of the functions of the FtsZ ring is to recruit other cell division proteins to the septum to produce a new cell wall between the dividing cells. Binds GTP and shows GTPase activity. This is Cell division protein FtsZ from Rickettsia prowazekii (strain Madrid E).